The following is a 370-amino-acid chain: Aminomethyltransferase (370 aa).

It belongs to the GcvT family. In terms of assembly, the glycine cleavage system is composed of four proteins: P, T, L and H.

The enzyme catalyses N(6)-[(R)-S(8)-aminomethyldihydrolipoyl]-L-lysyl-[protein] + (6S)-5,6,7,8-tetrahydrofolate = N(6)-[(R)-dihydrolipoyl]-L-lysyl-[protein] + (6R)-5,10-methylene-5,6,7,8-tetrahydrofolate + NH4(+). The glycine cleavage system catalyzes the degradation of glycine. This Clostridium botulinum (strain Langeland / NCTC 10281 / Type F) protein is Aminomethyltransferase.